Consider the following 393-residue polypeptide: NAD(P)H-quinone oxidoreductase subunit H, chloroplastic (393 aa).

Belongs to the complex I 49 kDa subunit family. In terms of assembly, NDH is composed of at least 16 different subunits, 5 of which are encoded in the nucleus.

The protein resides in the plastid. It localises to the chloroplast thylakoid membrane. The enzyme catalyses a plastoquinone + NADH + (n+1) H(+)(in) = a plastoquinol + NAD(+) + n H(+)(out). It carries out the reaction a plastoquinone + NADPH + (n+1) H(+)(in) = a plastoquinol + NADP(+) + n H(+)(out). Its function is as follows. NDH shuttles electrons from NAD(P)H:plastoquinone, via FMN and iron-sulfur (Fe-S) centers, to quinones in the photosynthetic chain and possibly in a chloroplast respiratory chain. The immediate electron acceptor for the enzyme in this species is believed to be plastoquinone. Couples the redox reaction to proton translocation, and thus conserves the redox energy in a proton gradient. The chain is NAD(P)H-quinone oxidoreductase subunit H, chloroplastic from Ranunculus macranthus (Large buttercup).